Reading from the N-terminus, the 428-residue chain is Serine--tRNA ligase (428 aa).

236 to 238 (TAE) lines the L-serine pocket. An ATP-binding site is contributed by 267–269 (RSE). L-serine is bound at residue Glu-290. 354-357 (EISS) contacts ATP. Ser-388 lines the L-serine pocket.

It belongs to the class-II aminoacyl-tRNA synthetase family. Type-1 seryl-tRNA synthetase subfamily. In terms of assembly, homodimer. The tRNA molecule binds across the dimer.

The protein localises to the cytoplasm. It carries out the reaction tRNA(Ser) + L-serine + ATP = L-seryl-tRNA(Ser) + AMP + diphosphate + H(+). It catalyses the reaction tRNA(Sec) + L-serine + ATP = L-seryl-tRNA(Sec) + AMP + diphosphate + H(+). It functions in the pathway aminoacyl-tRNA biosynthesis; selenocysteinyl-tRNA(Sec) biosynthesis; L-seryl-tRNA(Sec) from L-serine and tRNA(Sec): step 1/1. Its function is as follows. Catalyzes the attachment of serine to tRNA(Ser). Is also able to aminoacylate tRNA(Sec) with serine, to form the misacylated tRNA L-seryl-tRNA(Sec), which will be further converted into selenocysteinyl-tRNA(Sec). The polypeptide is Serine--tRNA ligase (Psychrobacter cryohalolentis (strain ATCC BAA-1226 / DSM 17306 / VKM B-2378 / K5)).